A 163-amino-acid chain; its full sequence is Ribosome maturation factor RimM (163 aa).

In terms of domain architecture, PRC barrel spans 92–162 (EDEFYVADLV…AGRAVVRPPE (71 aa)).

It belongs to the RimM family. As to quaternary structure, binds ribosomal protein uS19.

It is found in the cytoplasm. In terms of biological role, an accessory protein needed during the final step in the assembly of 30S ribosomal subunit, possibly for assembly of the head region. Essential for efficient processing of 16S rRNA. May be needed both before and after RbfA during the maturation of 16S rRNA. It has affinity for free ribosomal 30S subunits but not for 70S ribosomes. This is Ribosome maturation factor RimM from Rubrobacter xylanophilus (strain DSM 9941 / JCM 11954 / NBRC 16129 / PRD-1).